Consider the following 592-residue polypeptide: AT-rich interactive domain-containing protein 5A (592 aa).

A disordered region spans residues 1–53 (MAPPVKGKRKQSEEGEPLDPPVSPQPDGEPRSRSPVRLEEPPEAGREREEEQE). An interaction with SOX9 region spans residues 1 to 299 (MAPPVKGKRK…AAPPLESPQS (299 aa)). Ser-23 carries the phosphoserine modification. A compositionally biased stretch (basic and acidic residues) spans 28–49 (GEPRSRSPVRLEEPPEAGRERE). The 93-residue stretch at 52-144 (QEEEQAFLVS…LVLPYVRHLK (93 aa)) folds into the ARID domain. Glycyl lysine isopeptide (Lys-Gly) (interchain with G-Cter in ubiquitin) cross-links involve residues Lys-82 and Lys-91. Positions 143-225 (LKGEDDKPLP…RGPAAGPSLP (83 aa)) are disordered. The segment covering 162 to 186 (MAKEPRGDDGATERPKKVKEEKRVD) has biased composition (basic and acidic residues). Position 253 is a phosphoserine (Ser-253). Residues 277 to 333 (CRHGAGGEPQAPPAAPPLESPQSPGGPAEDSRHRLTPLEGRQAPGGGLWGETQAGPR) are disordered. A compositionally biased stretch (pro residues) spans 286–295 (QAPPAAPPLE). Phosphoserine is present on residues Ser-438 and Ser-463.

As to quaternary structure, interacts with SOX9. Interacts with ESR1. Interacts with RORC. In terms of processing, phosphorylated by MAPK14 on serine residues involving a TLR4 signaling pathway upon lipopolysaccharide (LPS) stimulation leading to its ubiquitination and proteasomal degradation. Post-translationally, ubiquitinated leading to proteasomal degradation; involving WWP1 linked to MAPK14-mediated phosphorylation upon LPS stimulation.

The protein resides in the nucleus. DNA-binding protein that may regulate transcription and act as a repressor by binding to AT-rich stretches in the promoter region of target genes. May act as repressor and down-regulate enhancer-dependent gene expressison. May positively regulate chondrocyte-specific transcription such as of COL2A1 in collaboration with SOX9 and positively regulate histone H3 acetylation at chondrocyte-specific genes. May stimulate early-stage chondrocyte differentiation and inhibit later stage differention. Can repress ESR1-mediated transcriptional activation; proposed to act as corepressor for selective nuclear hormone receptors. As an RNA-binding protein, involved in the regulation of inflammatory response by stabilizing selective inflammation-related mRNAs, such as STAT3 and TBX21. Also stabilizes IL6 mRNA. Binds to stem loop structures located in the 3'UTRs of IL6, STAT3 and TBX21 mRNAs; at least for STAT3 prevents binding of ZC3H12A to the mRNA stem loop structure thus inhibiting its degradation activity. Contributes to elevated IL6 levels possibly implicated in autoimmunity processes. IL6-dependent stabilization of STAT3 mRNA may promote differentiation of naive CD4+ T-cells into T-helper Th17 cells. In CD4+ T-cells may also inhibit RORC-induced Th17 cell differentiation independently of IL6 signaling. Stabilization of TBX21 mRNA contributes to elevated interferon-gamma secretion in Th1 cells possibly implicated in the establishment of septic shock. Stabilizes TNFRSF4/OX40 mRNA by binding to the conserved stem loop structure in its 3'UTR; thereby competing with the mRNA-destabilizing functions of RC3H1 and endoribonuclease ZC3H12A. The chain is AT-rich interactive domain-containing protein 5A (ARID5A) from Bos taurus (Bovine).